The following is a 257-amino-acid chain: MLILVSPAKTLDFEQPPLTQVYSQPDFLTHSQELIQVCRQLTPSDISTLMKVSDKIAGLNAARFGQWQPGFSLDNAKQAIFAFRGDVYTGFDADSLSEDEIAQTQSQLRILSGLYGLLRPLDLIMPYRLEMGTALSNPKGKNLYEFWGDTLTQAVNEALAESGSDIIVNLASNEYFKAIKPKKLQGQLISPVFKDCKNGQYKVISFFAKRARGMMARYIITNKVNTLAELKAFNLAGYYYSEEQSSPTNPTFLREEQ.

This sequence belongs to the UPF0246 family.

This is UPF0246 protein Shew185_1115 from Shewanella baltica (strain OS185).